Consider the following 1263-residue polypeptide: Multidrug resistance protein sirA (1263 aa).

Positions 1–21 (MAEPESEKPSSAQGGGLPSSD) are disordered. 4 consecutive transmembrane segments (helical) span residues 57–77 (LISA…ILFI), 104–124 (IALY…IFTN), 179–199 (KIGL…IGFV), and 206–226 (FILT…SGFM). The ABC transmembrane type-1 1 domain maps to 57-347 (LISAFFAAVS…VGPHLQAMSL (291 aa)). N232 carries N-linked (GlcNAc...) asparagine glycosylation. 2 helical membrane-spanning segments follow: residues 284–304 (VMGW…GLAI) and 318–338 (VGAI…FGNV). The 246-residue stretch at 380–625 (IEFRNVSHVY…EGLYQTFVRR (246 aa)) folds into the ABC transporter 1 domain. The N-linked (GlcNAc...) asparagine glycan is linked to N384. 415-422 (GASGSGKS) serves as a coordination point for ATP. A glycan (N-linked (GlcNAc...) asparagine) is linked at N469. The interval 635–672 (PPHARITPAVDTPASPQHRLSEKTGSIYGQGESEAADK) is disordered. 6 consecutive transmembrane segments (helical) span residues 699–719 (VTGI…SVFF), 740–760 (FWAA…GVQG), 817–839 (VFLG…SLAV), 843–865 (LTLV…LKLV), 930–950 (LSEA…ATLV), and 960–980 (FFIV…VFAF). In terms of domain architecture, ABC transmembrane type-1 2 spans 699–986 (VTGIASAVIS…VFAFAPDFGK (288 aa)). The ABC transporter 2 domain occupies 1021–1259 (VDVSNVVFYY…RGSYYDSVNL (239 aa)). Residue 1056–1063 (GGSGSGKS) coordinates ATP.

This sequence belongs to the ABC transporter superfamily. ABCB family. Multidrug resistance exporter (TC 3.A.1.201) subfamily.

The protein resides in the cell membrane. The enzyme catalyses ATP + H2O + xenobioticSide 1 = ADP + phosphate + xenobioticSide 2.. Functionally, sirodesmin transporter that provides the dual role of sirodesmin export and self-protection. Also provides tolerance to gliotoxin. The polypeptide is Multidrug resistance protein sirA (Leptosphaeria maculans (Blackleg fungus)).